Reading from the N-terminus, the 716-residue chain is Polyribonucleotide nucleotidyltransferase (716 aa).

Residues Asp485 and Asp491 each contribute to the Mg(2+) site. In terms of domain architecture, KH spans 552–611; it reads PKITTISVPKEKIRDVIGSGGKVIREIVEYSGAKVDIGDDGTVTIAASNDEQAQKAIARI. The S1 motif domain maps to 621 to 689; that stretch reads GRIYEGKVVK…DRGKVKLSMR (69 aa).

It belongs to the polyribonucleotide nucleotidyltransferase family. Requires Mg(2+) as cofactor.

Its subcellular location is the cytoplasm. The catalysed reaction is RNA(n+1) + phosphate = RNA(n) + a ribonucleoside 5'-diphosphate. Involved in mRNA degradation. Catalyzes the phosphorolysis of single-stranded polyribonucleotides processively in the 3'- to 5'-direction. The protein is Polyribonucleotide nucleotidyltransferase of Gluconobacter oxydans (strain 621H) (Gluconobacter suboxydans).